A 264-amino-acid chain; its full sequence is Thiazole synthase (264 aa).

The active-site Schiff-base intermediate with DXP is the Lys106. 1-deoxy-D-xylulose 5-phosphate-binding positions include Gly167, 193 to 194, and 215 to 216; these read AG and NT.

Belongs to the ThiG family. Homotetramer. Forms heterodimers with either ThiH or ThiS.

Its subcellular location is the cytoplasm. The catalysed reaction is [ThiS sulfur-carrier protein]-C-terminal-Gly-aminoethanethioate + 2-iminoacetate + 1-deoxy-D-xylulose 5-phosphate = [ThiS sulfur-carrier protein]-C-terminal Gly-Gly + 2-[(2R,5Z)-2-carboxy-4-methylthiazol-5(2H)-ylidene]ethyl phosphate + 2 H2O + H(+). Its pathway is cofactor biosynthesis; thiamine diphosphate biosynthesis. Its function is as follows. Catalyzes the rearrangement of 1-deoxy-D-xylulose 5-phosphate (DXP) to produce the thiazole phosphate moiety of thiamine. Sulfur is provided by the thiocarboxylate moiety of the carrier protein ThiS. In vitro, sulfur can be provided by H(2)S. This Stenotrophomonas maltophilia (strain K279a) protein is Thiazole synthase.